The following is a 100-amino-acid chain: Ribosomal processing cysteine protease Prp (100 aa).

Histidine 16 (proton donor) is an active-site residue. Cysteine 28 (nucleophile) is an active-site residue.

The protein belongs to the Prp family. Homodimer.

In terms of biological role, an essential cysteine protease that cleaves the N-terminus from ribosomal protein bL27. This is Ribosomal processing cysteine protease Prp from Mycoplasma pneumoniae (strain ATCC 29342 / M129 / Subtype 1) (Mycoplasmoides pneumoniae).